A 431-amino-acid polypeptide reads, in one-letter code: Keratin, type I cytoskeletal 20 (431 aa).

Residues 1-23 (MDFSRQSFHRSLSSSSQGPALSM) form a disordered region. Residues 1–76 (MDFSRQSFHR…SNGSDLFGGN (76 aa)) are head. Phosphoserine; by MAPKAPK2, MAPKAPK3 and PKC is present on Ser-13. Phosphoserine is present on residues Ser-16 and Ser-26. The segment at 77–112 (GKLAMQNLNDRLANYLEKVRSLEQSNSRLEAQIKQW) is coil 1A. In terms of domain architecture, IF rod spans 77–388 (GKLAMQNLND…RLLEGEDIKT (312 aa)). Positions 113-130 (YETNAPSTIRDYSSYYAQ) are linker 1. Residues 131–222 (IKELQNQVKD…KEHQEEVEVL (92 aa)) are coil 1B. The tract at residues 223–245 (RRQLGNNVNVEVDAAPGLNLGEI) is linker 12. The interval 246–384 (MNEMRQRYEV…ATYRRLLEGE (139 aa)) is coil 2. The tail stretch occupies residues 385–431 (DIKTTEYQLSTLEMKDIKKTRKIKTVVEEVVDGKVVSSEVKEIEESV).

This sequence belongs to the intermediate filament family. In terms of assembly, heterotetramer of two type I and two type II keratins. Associates with KRT8. Hyperphosphorylation at Ser-13 occurs during the early stages of apoptosis but becomes less prominent during the later stages. Phosphorylation at Ser-13 also increases in response to stress brought on by cell injury. In terms of processing, proteolytically cleaved by caspases during apoptosis. Cleavage occurs at Asp-235. Expressed at low levels in the more differentiated suprabasal regions of the small intestine, and at higher levels in the colon, mainly in the upper region and in scattered cells throughout the remaining epithelium. Also expressed in epithelial cells of bladder, ileum and stomach and at lower levels in pancreas and earskin. The phosphorylated form is nearly exclusively expressed in goblet cells of the small intestine and in the lumen-proximal cells of the colon (at protein level). Also expressed in jejunum and duodenum.

Functionally, plays a significant role in maintaining keratin filament organization in intestinal epithelia. When phosphorylated, plays a role in the secretion of mucin in the small intestine. This chain is Keratin, type I cytoskeletal 20, found in Mus musculus (Mouse).